A 292-amino-acid polypeptide reads, in one-letter code: ATP synthase gamma chain (292 aa).

It belongs to the ATPase gamma chain family. F-type ATPases have 2 components, CF(1) - the catalytic core - and CF(0) - the membrane proton channel. CF(1) has five subunits: alpha(3), beta(3), gamma(1), delta(1), epsilon(1). CF(0) has three main subunits: a, b and c.

Its subcellular location is the cell inner membrane. Functionally, produces ATP from ADP in the presence of a proton gradient across the membrane. The gamma chain is believed to be important in regulating ATPase activity and the flow of protons through the CF(0) complex. The polypeptide is ATP synthase gamma chain (Magnetococcus marinus (strain ATCC BAA-1437 / JCM 17883 / MC-1)).